The following is a 668-amino-acid chain: SHC SH2 domain-binding protein 1 (668 aa).

At A2 the chain carries N-acetylalanine. Phosphoserine is present on residues S31, S44, and S273. PbH1 repeat units follow at residues 428–451 (GMDV…LIIH), 452–473 (HGKT…TVRT), 474–496 (SAEL…EIYP), 497–518 (GSKC…LIKD), and 526–548 (IPKI…VLVK). S630 is modified (phosphoserine).

As to quaternary structure, interacts directly with isoform p52shc of SHC1 via its SH2 domain. Interacts with TRIM71; leading to enhanced SHCBP1 protein stability. Interacts with both members of the centralspindlin complex, KIF23 and RACGAP1. As to expression, expressed in spleen, lung and heart with higher expression in testis. No expression in brain, liver and skeletal muscle. Elevated expression in actively cycling cells.

It is found in the midbody. The protein resides in the cytoplasm. The protein localises to the cytoskeleton. Its subcellular location is the spindle. Functionally, may play a role in signaling pathways governing cellular proliferation, cell growth and differentiation. May be a component of a novel signaling pathway downstream of Shc. Acts as a positive regulator of FGF signaling in neural progenitor cells. This Mus musculus (Mouse) protein is SHC SH2 domain-binding protein 1 (Shcbp1).